Here is a 477-residue protein sequence, read N- to C-terminus: Glutamate--tRNA ligase (477 aa).

The 'HIGH' region motif lies at 18–28; sequence PSPTGFIHLGN. A compositionally biased stretch (basic and acidic residues) spans 128-138; the sequence is PRYDGSWRPEP. The tract at residues 128 to 151 is disordered; it reads PRYDGSWRPEPGKTLPPVPAGMSP. The short motif at 250–254 is the 'KMSKS' region element; sequence KLSKR. Lysine 253 is a binding site for ATP.

The protein belongs to the class-I aminoacyl-tRNA synthetase family. Glutamate--tRNA ligase type 1 subfamily. As to quaternary structure, monomer.

It localises to the cytoplasm. It catalyses the reaction tRNA(Glu) + L-glutamate + ATP = L-glutamyl-tRNA(Glu) + AMP + diphosphate. Functionally, catalyzes the attachment of glutamate to tRNA(Glu) in a two-step reaction: glutamate is first activated by ATP to form Glu-AMP and then transferred to the acceptor end of tRNA(Glu). This chain is Glutamate--tRNA ligase, found in Verminephrobacter eiseniae (strain EF01-2).